The following is a 586-amino-acid chain: MATATPVPPRMGSRAGGPTTPLSPTRLSRLQEKEELRELNDRLAVYIDKVRSLETENSALQLQVTEREEVRGRELTGLKALYETELADARRALDDTARERAKLQIELGKCKAEHDQLLLNYAKKESDLNGAQIKLREYEAALNSKDAALATALGDKKSLEGDLEDLKDQIAQLEASLAAAKKQLADETLLKVDLENRCQSLTEDLEFRKSMYEEEINETRRKHETRLVEVDSGRQIEYEYKLAQALHEMREQHDAQVRLYKEELEQTYHAKLENARLSSEMNTSTVNSAREELMESRMRIESLSSQLSNLQKESRACLERIQELEDLLAKEKDNSRRMLTDKEREMAEIRDQMQQQLNDYEQLLDVKLALDMEISAYRKLLEGEEERLKLSPSPSSRVTVSRASSSRSVRTTRGKRKRVDVEESEASSSVSISHSASATGNVCIEEIDVDGKFIRLKNTSEQDQPMGGWEMIRKIGDTSVSYKYTSRYVLKAGQTVTIWAANAGVTASPPTDLIWKNQNSWGTGEDVKVILKNSQGEEVAQRSTVFKTTIPEEEEEEEEAAGVVVEEELFHQQGTPRASNRSCAIM.

The disordered stretch occupies residues 1 to 31; the sequence is MATATPVPPRMGSRAGGPTTPLSPTRLSRLQ. Alanine 2 bears the N-acetylalanine mark. The tract at residues 2-34 is head; it reads ATATPVPPRMGSRAGGPTTPLSPTRLSRLQEKE. Threonine 3 and threonine 5 each carry phosphothreonine. Arginine 14 is subject to Omega-N-methylarginine. Threonine 20 is modified (phosphothreonine). Serine 23 is modified (phosphoserine). Phosphothreonine is present on threonine 25. Serine 28 is modified (phosphoserine). Positions 32–388 constitute an IF rod domain; it reads EKEELRELND…KLLEGEEERL (357 aa). Residues 35–69 are coil 1A; sequence ELRELNDRLAVYIDKVRSLETENSALQLQVTEREE. The interval 70 to 81 is linker 1; the sequence is VRGRELTGLKAL. Residues 82 to 215 form a coil 1B region; it reads YETELADARR…EFRKSMYEEE (134 aa). Lysine 102 participates in a covalent cross-link: Glycyl lysine isopeptide (Lys-Gly) (interchain with G-Cter in SUMO2). Position 111 is an N6-acetyllysine (lysine 111). Lysine 123 is covalently cross-linked (Glycyl lysine isopeptide (Lys-Gly) (interchain with G-Cter in SUMO2)). Serine 126 carries the post-translational modification Phosphoserine. Lysine 145 is covalently cross-linked (Glycyl lysine isopeptide (Lys-Gly) (interchain with G-Cter in SUMO2)). The residue at position 157 (lysine 157) is an N6-acetyllysine; alternate. A Glycyl lysine isopeptide (Lys-Gly) (interchain with G-Cter in SUMO2); alternate cross-link involves residue lysine 157. Serine 158 carries the post-translational modification Phosphoserine. Residue lysine 181 forms a Glycyl lysine isopeptide (Lys-Gly) (interchain with G-Cter in SUMO2) linkage. Phosphoserine occurs at positions 200, 210, and 232. The segment at 216–243 is linker 2; it reads INETRRKHETRLVEVDSGRQIEYEYKLA. Residues lysine 241 and lysine 261 each participate in a glycyl lysine isopeptide (Lys-Gly) (interchain with G-Cter in SUMO2) cross-link. A coil 2 region spans residues 244–386; it reads QALHEMREQH…YRKLLEGEEE (143 aa). An N6-acetyllysine; alternate modification is found at lysine 271. Residue lysine 271 forms a Glycyl lysine isopeptide (Lys-Gly) (interchain with G-Cter in SUMO2); alternate linkage. Serine 278 and serine 302 each carry phosphoserine. Residue lysine 312 forms a Glycyl lysine isopeptide (Lys-Gly) (interchain with G-Cter in SUMO2) linkage. Lysine 330 is subject to N6-acetyllysine; alternate. Residue lysine 330 forms a Glycyl lysine isopeptide (Lys-Gly) (interchain with G-Cter in SUMO2); alternate linkage. Serine 375 and serine 393 each carry phosphoserine. The tract at residues 387–586 is tail; the sequence is RLKLSPSPSS…RASNRSCAIM (200 aa). The segment at 388–432 is disordered; it reads LKLSPSPSSRVTVSRASSSRSVRTTRGKRKRVDVEESEASSSVSI. Positions 390–409 are enriched in low complexity; that stretch reads LSPSPSSRVTVSRASSSRSV. Residue threonine 399 is glycosylated (O-linked (GlcNAc) threonine). The residue at position 413 (arginine 413) is an Omega-N-methylarginine. The Nuclear localization signal motif lies at 415–420; sequence KRKRVD. In terms of domain architecture, LTD spans 430-546; sequence VSISHSASAT…EEVAQRSTVF (117 aa). Lysine 483 carries the N6-acetyllysine modification. Residue lysine 532 forms a Glycyl lysine isopeptide (Lys-Gly) (interchain with G-Cter in SUMO2) linkage. Serine 534 is modified (phosphoserine). Residue lysine 547 forms a Glycyl lysine isopeptide (Lys-Gly) (interchain with G-Cter in SUMO2) linkage. Threonine 575 bears the Phosphothreonine mark. Position 583 is a cysteine methyl ester (cysteine 583). Residue cysteine 583 is the site of S-farnesyl cysteine attachment. Residues 584-586 constitute a propeptide, removed in mature form; it reads AIM.

This sequence belongs to the intermediate filament family. In terms of assembly, homodimer. Lamin dimers then assemble into dimeric head-to-tail polymers. Ultimately, two head-to-tail polymers assemble laterally into a protofilament with a uniformly shaped rod of 3.5 nm in diameter. Interacts with SPAG4 and SEPT12. B-type lamins undergo a series of modifications, such as farnesylation and phosphorylation. Increased phosphorylation of the lamins occurs before envelope disintegration and probably plays a role in regulating lamin associations. In terms of processing, phosphorylation plays a key role in lamin organization, subcellular localization and nuclear envelope disintegration. Phosphorylation by CDK1 at Ser-23 and Ser-393 at the onset of mitosis drives lamin disassembly and nuclear envelope breakdown.

Its subcellular location is the nucleus lamina. Its function is as follows. Lamins are intermediate filament proteins that assemble into a filamentous meshwork, and which constitute the major components of the nuclear lamina, a fibrous layer on the nucleoplasmic side of the inner nuclear membrane. Lamins provide a framework for the nuclear envelope, bridging the nuclear envelope and chromatin, thereby playing an important role in nuclear assembly, chromatin organization, nuclear membrane and telomere dynamics. The structural integrity of the lamina is strictly controlled by the cell cycle, as seen by the disintegration and formation of the nuclear envelope in prophase and telophase, respectively. The chain is Lamin-B1 (LMNB1) from Homo sapiens (Human).